Consider the following 559-residue polypeptide: Dihydroxy-acid dehydratase 2 (559 aa).

Cys-53 serves as a coordination point for [2Fe-2S] cluster. Asp-85 provides a ligand contact to Mg(2+). Cys-126 contributes to the [2Fe-2S] cluster binding site. Positions 127 and 128 each coordinate Mg(2+). An N6-carboxylysine modification is found at Lys-128. Cys-195 provides a ligand contact to [2Fe-2S] cluster. Glu-446 lines the Mg(2+) pocket. Residue Ser-472 is the Proton acceptor of the active site.

This sequence belongs to the IlvD/Edd family. Homodimer. Requires [2Fe-2S] cluster as cofactor. Mg(2+) is required as a cofactor.

The enzyme catalyses (2R)-2,3-dihydroxy-3-methylbutanoate = 3-methyl-2-oxobutanoate + H2O. It carries out the reaction (2R,3R)-2,3-dihydroxy-3-methylpentanoate = (S)-3-methyl-2-oxopentanoate + H2O. The protein operates within amino-acid biosynthesis; L-isoleucine biosynthesis; L-isoleucine from 2-oxobutanoate: step 3/4. It participates in amino-acid biosynthesis; L-valine biosynthesis; L-valine from pyruvate: step 3/4. Functionally, functions in the biosynthesis of branched-chain amino acids. Catalyzes the dehydration of (2R,3R)-2,3-dihydroxy-3-methylpentanoate (2,3-dihydroxy-3-methylvalerate) into 2-oxo-3-methylpentanoate (2-oxo-3-methylvalerate) and of (2R)-2,3-dihydroxy-3-methylbutanoate (2,3-dihydroxyisovalerate) into 2-oxo-3-methylbutanoate (2-oxoisovalerate), the penultimate precursor to L-isoleucine and L-valine, respectively. The sequence is that of Dihydroxy-acid dehydratase 2 from Pseudoalteromonas translucida (strain TAC 125).